A 220-amino-acid chain; its full sequence is CRISPR system Cms endoribonuclease Csm3 (220 aa).

The protein belongs to the CRISPR-associated Csm3 family. Part of the Csm effector complex that includes at least Cas10(1), Csm2(3), Csm3(5), Csm4(1), Csm5(1) and mature crRNA. The Csm complex is elongated and slightly twisted with a maximal length of 215 Angstroms and a diameter of 75-80 Angstroms. It has been modeled to have a central protein filamant of Csm3 subunits along which the dsRNA helix of paired crRNA and target RNA binds. The filament is capped at one end by Cas10 and Csm4 and at the other end by Csm5; ssDNA is thought to bind to the N-terminal HD domain of Cas10. Csm with a precursor crRNA does not include Csm5, while Cas6, the enzyme probably involved in pre-crRNA processing, is found associated with a subset of the Csm complex. It depends on a metal cation as a cofactor.

With respect to regulation, target ssRNase is inhibited by EDTA. Functionally, CRISPR (clustered regularly interspaced short palindromic repeat) is an adaptive immune system that provides protection against mobile genetic elements (viruses, transposable elements and conjugative plasmids). CRISPR clusters contain spacers, sequences complementary to antecedent mobile elements, and target invading nucleic acids. CRISPR clusters are transcribed and processed into CRISPR RNA (crRNA). The type III-A Csm effector complex binds crRNA and acts as a crRNA-guided RNase, DNase and cyclic oligoadenylate synthase; binding of target RNA cognate to the crRNA is required for all activities. In a heterologous host this Csm effector complex restricts ssRNA phage MS2, suggesting it may target RNA viruses in vivo. Csm functions as a non-specific ssDNase. Base-pairing between crRNA and target RNA to form a ternary Csm complex activates a ssDNase activity; target RNA cleavage suppresses the ssDNase, a temporal control that prevents uncontrolled DNA degradation. Viral RNA transcripts probably tether the Csm complex to the viral genome, recruiting Cas10 ssDNA activity which is able to degrade DNA in the transcription bubble, spatially controlling the DNase activity. In terms of biological role, this subunit has the target ssRNA endonuclease activity; it cleaves multiple sites in the target RNA at 6 nucleotide intervals. The number of cleavage sites in the target RNA correlates with the number of Csm3 subunits in the Csm effector complex. In the Csm complex target RNA and ssDNA are cleaved simultaneously, although RNase activity (of Csm3) is much faster. RNA cleavage by Csm3 is not required for ssDNase activity as Csm complex with inactive Csm3 still has ssDNase activity; however as the cleaved target RNA products dissociate away ssDNase activity decreases. In Streptococcus thermophilus, this protein is CRISPR system Cms endoribonuclease Csm3.